The following is a 354-amino-acid chain: Serum paraoxonase/arylesterase 2 (354 aa).

The cysteines at positions 42 and 352 are disulfide-linked. Asp53 and Asp54 together coordinate Ca(2+). Residue His114 is the Proton acceptor of the active site. Ile116, Asn167, Asp168, and Asn223 together coordinate Ca(2+). Asn254 carries N-linked (GlcNAc...) asparagine glycosylation. Ca(2+) is bound by residues Asp268 and Asn269. N-linked (GlcNAc...) asparagine glycans are attached at residues Asn269 and Asn323.

This sequence belongs to the paraoxonase family. As to quaternary structure, homotrimer. Ca(2+) is required as a cofactor. Post-translationally, glycosylated. In terms of processing, the signal sequence is not cleaved.

The protein localises to the membrane. It catalyses the reaction a phenyl acetate + H2O = a phenol + acetate + H(+). The enzyme catalyses an N-acyl-L-homoserine lactone + H2O = an N-acyl-L-homoserine + H(+). Its function is as follows. Capable of hydrolyzing lactones and a number of aromatic carboxylic acid esters. This chain is Serum paraoxonase/arylesterase 2 (PON2), found in Canis lupus familiaris (Dog).